Here is an 865-residue protein sequence, read N- to C-terminus: AP-1 complex subunit gamma-1 (865 aa).

Residues 665–690 form a disordered region; that stretch reads AEPLETPVDEMTQSPQSSLSRAPSTS. A compositionally biased stretch (polar residues) spans 675–690; the sequence is MTQSPQSSLSRAPSTS. In terms of domain architecture, GAE spans 746–860; sequence KSYPPIVVFD…LDQVDFGKLP (115 aa).

The protein belongs to the adaptor complexes large subunit family. As to quaternary structure, adaptor protein complex 1 (AP-1) is a heterotetramer composed of two large adaptins (gamma-type subunit apl4 and beta-type subunit apl2), a medium adaptin (mu-type subunit apm1) and a small adaptin (sigma-type subunit aps1). AP-1 interacts with clathrin.

It is found in the cytoplasmic vesicle. Its subcellular location is the clathrin-coated vesicle membrane. The protein resides in the golgi apparatus. Functionally, adaptins are components of the adaptor complexes which link clathrin to receptors in coated vesicles. Clathrin-associated protein complexes are believed to interact with the cytoplasmic tails of membrane proteins, leading to their selection and concentration. The AP-1 complex interacts directly with clathrin. The chain is AP-1 complex subunit gamma-1 (apl4) from Schizosaccharomyces pombe (strain 972 / ATCC 24843) (Fission yeast).